Here is an 81-residue protein sequence, read N- to C-terminus: Cytochrome c oxidase subunit 7A1, mitochondrial (81 aa).

Residues 1-21 constitute a mitochondrion transit peptide; that stretch reads MRHLLGLPQLASRAFSTTVRQ. A helical membrane pass occupies residues 51 to 72; sequence ILYRLTMTLTVVGTGYSLYWLL.

Belongs to the cytochrome c oxidase VIIa family. As to quaternary structure, component of the complex IV (CIV, cytochrome c oxidase). The complex exists as a monomer or a dimer and forms supercomplexes (SCs) in the inner mitochondrial membrane with NADH-ubiquinone oxidoreductase (complex I, CI) and ubiquinol-cytochrome c oxidoreductase (cytochrome b-c1 complex, complex III, CIII), resulting in different assemblies (supercomplex SCI(1)III(2)IV(1) and megacomplex MCI(2)III(2)IV(2)).

Its subcellular location is the mitochondrion inner membrane. It functions in the pathway energy metabolism; oxidative phosphorylation. Component of the mitochondrial respiratory complex IV (CIV, also named cytochrome c oxidase complex), the last enzyme in the mitochondrial electron transport chain which drives oxidative phosphorylation. The CIV complex is the component of the respiratory chain that catalyzes the reduction of oxygen to water. Acts as an assembly factor that specifically drives the homodimerization of CIV complexes, mediating the formation of mitochondrial respiratory supercomplexes (respirasomes) containing two CIV: supercomplxes with two molecules of CIV show improved activity. The sequence is that of Cytochrome c oxidase subunit 7A1, mitochondrial from Danio rerio (Zebrafish).